The sequence spans 400 residues: Enoyl-[acyl-carrier-protein] reductase [NADH] (400 aa).

NAD(+)-binding positions include 48–53 (GSSSGY), 74–75 (FE), 111–112 (DA), and 139–140 (LA). Residue Tyr-225 coordinates substrate. Catalysis depends on Tyr-235, which acts as the Proton donor. Residues Lys-244 and 273–275 (VVT) contribute to the NAD(+) site.

It belongs to the TER reductase family. As to quaternary structure, monomer.

The enzyme catalyses a 2,3-saturated acyl-[ACP] + NAD(+) = a (2E)-enoyl-[ACP] + NADH + H(+). It participates in lipid metabolism; fatty acid biosynthesis. In terms of biological role, involved in the final reduction of the elongation cycle of fatty acid synthesis (FAS II). Catalyzes the reduction of a carbon-carbon double bond in an enoyl moiety that is covalently linked to an acyl carrier protein (ACP). This chain is Enoyl-[acyl-carrier-protein] reductase [NADH], found in Aliivibrio salmonicida (strain LFI1238) (Vibrio salmonicida (strain LFI1238)).